A 252-amino-acid polypeptide reads, in one-letter code: Protein A47 (252 aa).

Belongs to the orthopoxvirus A47 protein family.

The sequence is that of Protein A47 from Vaccinia virus (strain Western Reserve) (VACV).